The chain runs to 920 residues: Vacuolar membrane protease (920 aa).

The Cytoplasmic segment spans residues 1-20 (MASSRAQRFNPIAFTPWPVT). The chain crosses the membrane as a helical span at residues 21-41 (CITTIVYLALLIPILVINLVV). Over 42–378 (PSAPETNPKG…AFAVFRLHTL (337 aa)) the chain is Vacuolar. 3 N-linked (GlcNAc...) asparagine glycosylation sites follow: asparagine 53, asparagine 116, and asparagine 119. The Zn(2+) site is built by histidine 175 and aspartate 187. The Proton acceptor role is filled by glutamate 221. Glutamate 222 is a Zn(2+) binding site. N-linked (GlcNAc...) asparagine glycosylation occurs at asparagine 238. Zn(2+) contacts are provided by glutamate 247 and histidine 306. Residues 379-399 (FAISVALLVIAPLVIFITSVI) form a helical membrane-spanning segment. The Cytoplasmic portion of the chain corresponds to 400–433 (LSKTDRMYLFSMSKSLEGTGDQVSLRGLRGFSRT). A helical transmembrane segment spans residues 434 to 454 (PIILVIATTIPICLAYLLEKV). Residues 455–463 (NPYIVHSSQ) are Vacuolar-facing. The chain crosses the membrane as a helical span at residues 464 to 484 (FSVWSMMFSAWIFLAWFLACA). Residues 485-495 (ADFFRPSALHR) are Cytoplasmic-facing. Residues 496-516 (AYSYTWIFVATWIMLVINTVY) form a helical membrane-spanning segment. The Vacuolar segment spans residues 517-520 (ANQK). The helical transmembrane segment at 521-541 (GIAAGYFLLFYFAGAFLATWI) threads the bilayer. Over 542-659 (SYLELFALPR…TLPRWTWVLQ (118 aa)) the chain is Cytoplasmic. The segment at 556-605 (ARQTTGRRPSSLSSRLLTSSADELRSNASPSTAEFPGAAGEDTDPTESTS) is disordered. Positions 559–575 (TTGRRPSSLSSRLLTSS) are enriched in low complexity. A helical transmembrane segment spans residues 660-680 (LLLLAPIVLILVGQLALFLTA). Residues 681–693 (SMCQVGSDGVSTF) are Vacuolar-facing. Residues 694-714 (VVYLACAVFTTLLCIPLFPLI) form a helical membrane-spanning segment. The Cytoplasmic segment spans residues 715–720 (HRFTYH). A helical transmembrane segment spans residues 721–741 (IPTFLFLVFIGTLIYNLVAFP). At 742–920 (FSPANRLKTF…VEASHSFTIQ (179 aa)) the chain is on the vacuolar side. N-linked (GlcNAc...) asparagine glycans are attached at residues asparagine 760, asparagine 788, and asparagine 832.

The protein belongs to the peptidase M28 family. It depends on Zn(2+) as a cofactor.

The protein resides in the vacuole membrane. In terms of biological role, may be involved in vacuolar sorting and osmoregulation. This is Vacuolar membrane protease from Ajellomyces capsulatus (strain H143) (Darling's disease fungus).